Reading from the N-terminus, the 284-residue chain is Bifunctional protein FolD (284 aa).

Residues 165–167, Ser-190, and Val-231 each bind NADP(+); that span reads GRS.

This sequence belongs to the tetrahydrofolate dehydrogenase/cyclohydrolase family. Homodimer.

It carries out the reaction (6R)-5,10-methylene-5,6,7,8-tetrahydrofolate + NADP(+) = (6R)-5,10-methenyltetrahydrofolate + NADPH. It catalyses the reaction (6R)-5,10-methenyltetrahydrofolate + H2O = (6R)-10-formyltetrahydrofolate + H(+). The protein operates within one-carbon metabolism; tetrahydrofolate interconversion. Functionally, catalyzes the oxidation of 5,10-methylenetetrahydrofolate to 5,10-methenyltetrahydrofolate and then the hydrolysis of 5,10-methenyltetrahydrofolate to 10-formyltetrahydrofolate. The protein is Bifunctional protein FolD of Geobacillus thermodenitrificans (strain NG80-2).